The primary structure comprises 157 residues: NADPH-dependent 7-cyano-7-deazaguanine reductase (157 aa).

Cysteine 55 (thioimide intermediate) is an active-site residue. Aspartate 62 acts as the Proton donor in catalysis. Substrate-binding positions include 77 to 79 and 96 to 97; these read VES and HE.

Belongs to the GTP cyclohydrolase I family. QueF type 1 subfamily.

The protein localises to the cytoplasm. The catalysed reaction is 7-aminomethyl-7-carbaguanine + 2 NADP(+) = 7-cyano-7-deazaguanine + 2 NADPH + 3 H(+). Its pathway is tRNA modification; tRNA-queuosine biosynthesis. Functionally, catalyzes the NADPH-dependent reduction of 7-cyano-7-deazaguanine (preQ0) to 7-aminomethyl-7-deazaguanine (preQ1). The chain is NADPH-dependent 7-cyano-7-deazaguanine reductase from Neisseria meningitidis serogroup B (strain ATCC BAA-335 / MC58).